A 1413-amino-acid polypeptide reads, in one-letter code: Leucine-rich repeat receptor protein kinase MSL1 (1413 aa).

The signal sequence occupies residues Met-1–Ala-23. Asn-153 and Asn-192 each carry an N-linked (GlcNAc...) asparagine glycan. 29 LRR repeats span residues Phe-185–Leu-209, Gln-210–Leu-233, Met-235–Leu-257, Gln-258–Leu-281, Lys-282–Asn-304, Ser-306–Leu-329, Val-330–Leu-353, Lys-354–Leu-377, Gln-379–Leu-401, Glu-402–Leu-425, Asn-427–Cys-449, Lys-450–Leu-473, Ala-475–Trp-497, Ser-498–Pro-518, Leu-519–Gly-542, Thr-543–Gly-565, Lys-567–Leu-589, Leu-590–Ser-613, Thr-615–Lys-636, Leu-637–Leu-661, Arg-662–Cys-685, Asn-687–Leu-709, Thr-710–Ala-733, Val-745–Cys-769, Ile-771–Leu-793, Arg-794–Leu-817, Ala-818–Ile-841, Pro-843–Lys-866, and Ser-868–Asp-890. N-linked (GlcNAc...) asparagine glycans are attached at residues Asn-304 and Asn-317. 3 N-linked (GlcNAc...) asparagine glycosylation sites follow: Asn-461, Asn-496, and Asn-499. N-linked (GlcNAc...) asparagine glycans are attached at residues Asn-554, Asn-568, and Asn-601. Asn-663 and Asn-697 each carry an N-linked (GlcNAc...) asparagine glycan. The N-linked (GlcNAc...) asparagine glycan is linked to Asn-768. N-linked (GlcNAc...) asparagine glycosylation occurs at Asn-795. 4 N-linked (GlcNAc...) asparagine glycosylation sites follow: Asn-878, Asn-901, Asn-917, and Asn-928. 2 LRR repeats span residues Phe-918–Val-942 and Ser-944–Met-966. Asn-973 carries N-linked (GlcNAc...) asparagine glycosylation. A helical membrane pass occupies residues Thr-1016–Leu-1036. The Protein kinase domain maps to Phe-1107–Val-1401. Residues Val-1113 to Val-1121 and Lys-1135 contribute to the ATP site. The active-site Proton acceptor is the Asp-1234.

Belongs to the protein kinase superfamily. Ser/Thr protein kinase family. Expressed in roots, leaves, shoots and spikelets.

The protein resides in the cell membrane. The catalysed reaction is L-seryl-[protein] + ATP = O-phospho-L-seryl-[protein] + ADP + H(+). It catalyses the reaction L-threonyl-[protein] + ATP = O-phospho-L-threonyl-[protein] + ADP + H(+). Receptor-like kinase that may play a role male and female sporogenesis. This is Leucine-rich repeat receptor protein kinase MSL1 from Oryza sativa subsp. japonica (Rice).